The sequence spans 68 residues: MEC1-mediated checkpoint protein HUG1 (68 aa).

Its subcellular location is the cytoplasm. The protein resides in the nucleus. Functionally, involved in the MEC1-mediated checkpoint response to DNA damage and replication arrest. This is MEC1-mediated checkpoint protein HUG1 (HUG1) from Saccharomyces cerevisiae (strain ATCC 204508 / S288c) (Baker's yeast).